Consider the following 252-residue polypeptide: Imidazole glycerol phosphate synthase subunit HisF (252 aa).

Residues aspartate 11 and aspartate 130 contribute to the active site.

This sequence belongs to the HisA/HisF family. As to quaternary structure, heterodimer of HisH and HisF.

It localises to the cytoplasm. The enzyme catalyses 5-[(5-phospho-1-deoxy-D-ribulos-1-ylimino)methylamino]-1-(5-phospho-beta-D-ribosyl)imidazole-4-carboxamide + L-glutamine = D-erythro-1-(imidazol-4-yl)glycerol 3-phosphate + 5-amino-1-(5-phospho-beta-D-ribosyl)imidazole-4-carboxamide + L-glutamate + H(+). It functions in the pathway amino-acid biosynthesis; L-histidine biosynthesis; L-histidine from 5-phospho-alpha-D-ribose 1-diphosphate: step 5/9. Its function is as follows. IGPS catalyzes the conversion of PRFAR and glutamine to IGP, AICAR and glutamate. The HisF subunit catalyzes the cyclization activity that produces IGP and AICAR from PRFAR using the ammonia provided by the HisH subunit. The polypeptide is Imidazole glycerol phosphate synthase subunit HisF (Acinetobacter baumannii (strain AB307-0294)).